Reading from the N-terminus, the 252-residue chain is MRIDVISLFPEFIAQCAAFGVVGRAQERGLLELKGWNPRDHAQGNYRRVDDRPFGGGPGMVMLIEPLRACLEVAQAADARPAPVIYLSPQGRPLTQPLARELAQLPRMVLLCGRYEGVDERFLDQAVDMEISIGDYVLSGGELGAAVLVDVVTRLQDGVLNDAESAAQDSFEGPQGLLDCPHYSHPSSHAWGDVPEVLRSGNHGAIARWRRQQSLGRTWLRRPELLDEATLDKQDRRLLEEFRRELAPGDEK.

Residues G113 and 133 to 138 contribute to the S-adenosyl-L-methionine site; that span reads IGDYVL.

Belongs to the RNA methyltransferase TrmD family. Homodimer.

It localises to the cytoplasm. The catalysed reaction is guanosine(37) in tRNA + S-adenosyl-L-methionine = N(1)-methylguanosine(37) in tRNA + S-adenosyl-L-homocysteine + H(+). Its function is as follows. Specifically methylates guanosine-37 in various tRNAs. This is tRNA (guanine-N(1)-)-methyltransferase from Xanthomonas campestris pv. campestris (strain 8004).